The sequence spans 211 residues: Endonuclease V (211 aa).

Positions 31 and 95 each coordinate Mg(2+). The interval 182–211 is disordered; sequence IYEVKNTPSPNRSRKKRGNRGKDNNNSQGN.

Belongs to the endonuclease V family. Mg(2+) serves as cofactor.

The protein resides in the cytoplasm. The enzyme catalyses Endonucleolytic cleavage at apurinic or apyrimidinic sites to products with a 5'-phosphate.. In terms of biological role, DNA repair enzyme involved in the repair of deaminated bases. Selectively cleaves double-stranded DNA at the second phosphodiester bond 3' to a deoxyinosine leaving behind the intact lesion on the nicked DNA. The protein is Endonuclease V of Pyrococcus horikoshii (strain ATCC 700860 / DSM 12428 / JCM 9974 / NBRC 100139 / OT-3).